The following is a 246-amino-acid chain: Proteasome subunit alpha (246 aa).

This sequence belongs to the peptidase T1A family. In terms of assembly, the 20S proteasome core is composed of 14 alpha and 14 beta subunits that assemble into four stacked heptameric rings, resulting in a barrel-shaped structure. The two inner rings, each composed of seven catalytic beta subunits, are sandwiched by two outer rings, each composed of seven alpha subunits. The catalytic chamber with the active sites is on the inside of the barrel. Has a gated structure, the ends of the cylinder being occluded by the N-termini of the alpha-subunits. Is capped by the proteasome-associated ATPase, ARC. Can also interact with the bacterial proteasome activator Bpa through the C-terminal hydrophobic-tyrosine-X motif (HbYX motif) of Bpa; Bpa forms a homooligomeric ring-like structure which stacks co-axially with the proteasomal alpha-rings. In terms of processing, pupylated at an undetermined lysine residue by the prokaryotic ubiquitin-like protein Pup with the help of the ligase PafA, which leads to its degradation by the proteasome and thereby constitutes a negative auto-regulation.

Its subcellular location is the cytoplasm. It functions in the pathway protein degradation; proteasomal Pup-dependent pathway. The formation of the proteasomal ATPase ARC-20S proteasome complex, likely via the docking of the C-termini of ARC into the intersubunit pockets in the alpha-rings, may trigger opening of the gate for substrate entry. Interconversion between the open-gate and close-gate conformations leads to a dynamic regulation of the 20S proteasome proteolysis activity. PPS auto-regulates its own activity via pupylation and degradation of its components. Peptidolytic activity is inhibited by N-acetyl-Leu-Leu-norleucinal (Ac-LLnL) in vitro. In terms of biological role, component of the proteasome core, a large protease complex with broad specificity involved in protein degradation. The M.smegmatis proteasome is able to cleave oligopeptides after hydrophobic residues, thus displaying chymotrypsin-like activity. In complex with the ATPase Mpa, degrades protein targets conjugated to a prokaryotic ubiquitin-like protein (Pup). Identified substrates of the M.smegmatis proteasome are the pupylated SodA and Ino1 proteins. The Pup-proteasome system (PPS) is essential for survival under starvation; PPS likely functions to recycle amino acids under nitrogen starvation, thereby enabling the cell to maintain basal metabolic activities. The sequence is that of Proteasome subunit alpha from Mycolicibacterium smegmatis (strain ATCC 700084 / mc(2)155) (Mycobacterium smegmatis).